A 387-amino-acid polypeptide reads, in one-letter code: Exodeoxyribonuclease 7 large subunit (387 aa).

The protein belongs to the XseA family. Heterooligomer composed of large and small subunits.

Its subcellular location is the cytoplasm. The catalysed reaction is Exonucleolytic cleavage in either 5'- to 3'- or 3'- to 5'-direction to yield nucleoside 5'-phosphates.. Its function is as follows. Bidirectionally degrades single-stranded DNA into large acid-insoluble oligonucleotides, which are then degraded further into small acid-soluble oligonucleotides. The polypeptide is Exodeoxyribonuclease 7 large subunit (Campylobacter jejuni subsp. jejuni serotype O:2 (strain ATCC 700819 / NCTC 11168)).